The primary structure comprises 305 residues: Olfactory receptor 4F5 (305 aa).

Residues 1-18 lie on the Extracellular side of the membrane; sequence MVTEFIFLGLSDSQELQT. The helical transmembrane segment at 19–42 threads the bilayer; sequence FLFMLFFVFYGGIVFGNLLIVITV. Residues 43 to 50 are Cytoplasmic-facing; it reads VSDSHLHS. The helical transmembrane segment at 51 to 72 threads the bilayer; it reads PMYFLLANLSLIDLSLSSVTAP. Over 73–93 the chain is Extracellular; it reads KMITDFFSQRKVISFKGCLVQ. Cys-90 and Cys-182 form a disulfide bridge. The helical transmembrane segment at 94–113 threads the bilayer; that stretch reads IFLLHFFGGSEMVILIAMGF. At 114-132 the chain is on the cytoplasmic side; the sequence is DRYIAICKPLHYTTIMCGN. A helical membrane pass occupies residues 133 to 151; it reads ACVGIMAVTWGIGFLHSVS. The Extracellular segment spans residues 152–188; it reads QLAFAVHLLFCGPNEVDSFYCDLPRVIKLACTDTYRL. The chain crosses the membrane as a helical span at residues 189 to 212; that stretch reads DIMVIANSGVLTVCSFVLLIISYT. Residues 213 to 228 lie on the Cytoplasmic side of the membrane; sequence IILMTIQHRPLDKSSK. Residues 229–251 traverse the membrane as a helical segment; it reads ALSTLTAHITVVLLFFGPCVFIY. At 252–262 the chain is on the extracellular side; it reads AWPFPIKSLDK. The chain crosses the membrane as a helical span at residues 263-282; the sequence is FLAVFYSVITPLLNPIIYTL. At 283–305 the chain is on the cytoplasmic side; sequence RNKDMKTAIRQLRKWDAHSSVKF.

Belongs to the G-protein coupled receptor 1 family.

The protein localises to the cell membrane. Functionally, odorant receptor. The sequence is that of Olfactory receptor 4F5 (OR4F5) from Homo sapiens (Human).